A 119-amino-acid polypeptide reads, in one-letter code: Large ribosomal subunit protein uL18 (119 aa).

This sequence belongs to the universal ribosomal protein uL18 family. In terms of assembly, part of the 50S ribosomal subunit; part of the 5S rRNA/L5/L18/L25 subcomplex. Contacts the 5S and 23S rRNAs.

Functionally, this is one of the proteins that bind and probably mediate the attachment of the 5S RNA into the large ribosomal subunit, where it forms part of the central protuberance. This Lactobacillus johnsonii (strain CNCM I-12250 / La1 / NCC 533) protein is Large ribosomal subunit protein uL18.